Here is a 215-residue protein sequence, read N- to C-terminus: Small ribosomal subunit protein uS3 (215 aa).

Residues I39–K109 form the KH type-2 domain.

This sequence belongs to the universal ribosomal protein uS3 family. In terms of assembly, part of the 30S ribosomal subunit. Forms a tight complex with proteins S10 and S14.

Functionally, binds the lower part of the 30S subunit head. Binds mRNA in the 70S ribosome, positioning it for translation. The protein is Small ribosomal subunit protein uS3 of Methylacidiphilum infernorum (isolate V4) (Methylokorus infernorum (strain V4)).